A 115-amino-acid polypeptide reads, in one-letter code: Large ribosomal subunit protein uL24 (115 aa).

The protein belongs to the universal ribosomal protein uL24 family. Part of the 50S ribosomal subunit.

Its function is as follows. One of two assembly initiator proteins, it binds directly to the 5'-end of the 23S rRNA, where it nucleates assembly of the 50S subunit. One of the proteins that surrounds the polypeptide exit tunnel on the outside of the subunit. This chain is Large ribosomal subunit protein uL24, found in Synechocystis sp. (strain ATCC 27184 / PCC 6803 / Kazusa).